The primary structure comprises 480 residues: Sestrin-2 (480 aa).

N-acetylmethionine is present on Met-1. Positions Pro-20–Ser-45 are disordered. Residues Gly-66–Ser-239 form an N-terminal domain; mediates the alkylhydroperoxide reductase activity region. The Cysteine sulfenic acid (-SOH) intermediate role is filled by Cys-125. Residue Lys-175 forms a Glycyl lysine isopeptide (Lys-Gly) (interchain with G-Cter in ubiquitin) linkage. The disordered stretch occupies residues Ala-222–Phe-252. Ser-249 carries the phosphoserine modification. Residues Pro-308 to Thr-480 are C-terminal domain; mediates TORC1 regulation. L-leucine is bound by residues Thr-374–Thr-377, Thr-386, and Glu-451.

It belongs to the sestrin family. In terms of assembly, interacts with the GATOR2 complex which is composed of MIOS, SEC13, SEH1L, WDR24 and WDR59; the interaction is negatively regulated by leucine. Conveys leucine availability via direct interaction with SEH1L and WDR24 components of the GATOR2 complex. Interacts with RRAGA, RRAGB, RRAGC and RRAGD; may function as a guanine nucleotide dissociation inhibitor for RRAGs and regulate them. May interact with the TORC2 complex. Interacts with KEAP1, RBX1, SQSTM and ULK1; to regulate the degradation of KEAP1. May also associate with the complex composed of TSC1, TSC2 and the AMP-responsive protein kinase/AMPK to regulate TORC1 signaling. May interact with PRDX1. In terms of processing, phosphorylated by ULK1 at multiple sites. Post-translationally, ubiquitinated at Lys-175 by RNF167 via 'Lys-63'-linked polyubiquitination in response to leucine deprivation: ubiquitination promotes SESN2-interaction with the GATOR2 complex, leading to inhibit the TORC1 signaling pathway. Deubiquitinated at Lys-175 by STAMBPL1, promoting the TORC1 signaling pathway. Ubiquitinated by RNF186; ubiquitination mediates proteasomal degradation.

The protein localises to the cytoplasm. The catalysed reaction is a hydroperoxide + L-cysteinyl-[protein] = S-hydroxy-L-cysteinyl-[protein] + an alcohol. Its function is as follows. Functions as an intracellular leucine sensor that negatively regulates the mTORC1 signaling pathway through the GATOR complex. In absence of leucine, binds the GATOR subcomplex GATOR2 and prevents mTORC1 signaling. Binding of leucine to SESN2 disrupts its interaction with GATOR2 thereby activating the TORC1 signaling pathway. This stress-inducible metabolic regulator also plays a role in protection against oxidative and genotoxic stresses. May negatively regulate protein translation in response to endoplasmic reticulum stress, via mTORC1. May positively regulate the transcription by NFE2L2 of genes involved in the response to oxidative stress by facilitating the SQSTM1-mediated autophagic degradation of KEAP1. May also mediate TP53 inhibition of TORC1 signaling upon genotoxic stress. Moreover, may prevent the accumulation of reactive oxygen species (ROS) through the alkylhydroperoxide reductase activity born by the N-terminal domain of the protein. Was originally reported to contribute to oxidative stress resistance by reducing PRDX1. However, this could not be confirmed. The chain is Sestrin-2 from Pongo abelii (Sumatran orangutan).